We begin with the raw amino-acid sequence, 266 residues long: MPLHYEVHGPADGEAVLLSSGLGGSAAFWQPQLGALLEAGHRVIAYDQRGTGRSPAALDAGYAIADMARDVVQILDATATPRCHLVGHALGGLVGLQLALDEPARVASLVLVNAWSKPNAHSARCFDARLALLDACGPRAYVEAQPIFLYPAAWCAEHAQRVADEVDHAFAHFPGEANMRARIGALRAFDIDARLGAITAPTLVAAAMDDALVPWTCSQRLADGLKDVTLHFLPHGGHAHSVTEAAVFNRSLLDFLARVSAPGVPA.

The AB hydrolase-1 domain occupies 15–128 (AVLLSSGLGG…NAHSARCFDA (114 aa)).

This sequence belongs to the AB hydrolase superfamily. Hydrolase RutD family.

The enzyme catalyses carbamate + 2 H(+) = NH4(+) + CO2. Functionally, involved in pyrimidine catabolism. May facilitate the hydrolysis of carbamate, a reaction that can also occur spontaneously. The chain is Putative carbamate hydrolase RutD from Variovorax paradoxus (strain S110).